Reading from the N-terminus, the 336-residue chain is 3-isopropylmalate dehydrogenase (336 aa).

Substrate-binding residues include R87, R97, R121, and D211. Mg(2+)-binding residues include D211, D235, and D239. 271–283 provides a ligand contact to NAD(+); that stretch reads GSAPDIAGQGIAD.

The protein belongs to the isocitrate and isopropylmalate dehydrogenases family. LeuB type 2 subfamily. As to quaternary structure, homodimer. Requires Mg(2+) as cofactor. Mn(2+) serves as cofactor.

Its subcellular location is the cytoplasm. The enzyme catalyses (2R,3S)-3-isopropylmalate + NAD(+) = 4-methyl-2-oxopentanoate + CO2 + NADH. Its pathway is amino-acid biosynthesis; L-leucine biosynthesis; L-leucine from 3-methyl-2-oxobutanoate: step 3/4. Its function is as follows. Catalyzes the oxidation of 3-carboxy-2-hydroxy-4-methylpentanoate (3-isopropylmalate) to 3-carboxy-4-methyl-2-oxopentanoate. The product decarboxylates to 4-methyl-2 oxopentanoate. The polypeptide is 3-isopropylmalate dehydrogenase (Mycobacterium bovis (strain ATCC BAA-935 / AF2122/97)).